The primary structure comprises 767 residues: Cadherin-5 (767 aa).

The signal sequence occupies residues 1-29 (MMKQCARRQMTEPVFRVAVLLALCSLSIG). A propeptide spanning residues 30-51 (VDVHQAQKTPSISSAALQRHKR) is cleaved from the precursor. Residues 30-593 (VDVHQAQKTP…SYARTGMSVS (564 aa)) lie on the Extracellular side of the membrane. Glu-62, Glu-63, Asp-113, and Glu-115 together coordinate Ca(2+). 5 consecutive Cadherin domains span residues 86 to 155 (RYIL…IPVF), 155 to 261 (FDSD…IATF), 262 to 373 (KKER…PPIF), 374 to 475 (NQTE…APEL), and 475 to 581 (LTNG…RVEY). N-linked (GlcNAc...) asparagine glycosylation occurs at Asn-121. Ca(2+) is bound by residues Asp-147, Ile-148, Asn-149, Asp-150, Asn-151, Asp-180, and Asp-182. Residue Asn-197 is glycosylated (N-linked (GlcNAc...) asparagine). Ca(2+) is bound at residue Asp-233. N-linked (GlcNAc...) asparagine glycans are attached at residues Asn-374, Asn-477, and Asn-518. The chain crosses the membrane as a helical span at residues 594 to 614 (ALLAILLCIITILVIVILIVL). Residues 615 to 767 (RRRYQKEVLV…VDGSDSDSSY (153 aa)) lie on the Cytoplasmic side of the membrane.

It localises to the cell membrane. The protein localises to the cell junction. It is found in the adherens junction. Functionally, cadherins are calcium-dependent cell adhesion proteins. They preferentially interact with themselves in a homophilic manner in connecting cells; cadherins may thus contribute to the sorting of heterogeneous cell types. Required for embryonic cardiac looping and heart chamber development, via promotion of cell-cell junction formation and subsequent attachment between the endothelial and myocardial layers of the heart. Required for the directional migration and delamination of endothelial cell monolayers, by which common cardinal veins form via the lumen ensheathment mechanism of vessel development as they migrate and connect with the heart inflow tract. Required for the formation of filopodia extensions (sprouts) at the initiation of intersegmental vessel development, by acting (via its C-terminus) to facilitate anchoring of the actin cytoskeleton to cell junctions in endothelial cells. Then positively regulates dorsal migration of stalk cells and sprout outgrowth towards the dorsal longitudinal anastomotic vessels (DLAV) via endothelial cell elongation. Following contact with the DLAV, required for intersegmental vessel lumen formation, potentially via facilitating the formation and/or extension of endothelial cell tight junctions that are required during tubulogenesis. This is Cadherin-5 from Danio rerio (Zebrafish).